Reading from the N-terminus, the 422-residue chain is MVGCRAASDAAEFESVVGSSRVARVSCAVRVGRVIIGGGSPVVVQSMALGGSGSLSSDLEEILCLAKEGSELIRVAINSEESIKSIPRIVEHLVSHGFDEKMVVGCGQYEVADLLNKYPDDAAFLGKIRINPGNVGFGDKRDRNFESVIEYAIKHDIPVRIGVNWGSLDKALIGKLMDDNASLASPYPDNVVMRKALVTSALQSAELAERIGLPRNKIVLSCKTSKVRDLVAVYSALSESADYALHLGLTEAGTGLKGIVSSTAGIAHLLLMGIGDTIRVSLTSTSREDRAQEVRVCKEILQSLGLRFFSAQTTSCPGCGRTNFPYFQKLVSGVNHYIDRRMQVWKVSNPGVVNMTVAVMGCVVNGPGESKHANLGISLPGNGEREVAAVYEDGRKLCTLHGENVLGEFLEIVESYVHRKYG.

[4Fe-4S] cluster is bound by residues cysteine 316, cysteine 319, cysteine 362, and glutamate 369.

Belongs to the IspG family. Requires [4Fe-4S] cluster as cofactor.

The catalysed reaction is (2E)-4-hydroxy-3-methylbut-2-enyl diphosphate + oxidized [flavodoxin] + H2O + 2 H(+) = 2-C-methyl-D-erythritol 2,4-cyclic diphosphate + reduced [flavodoxin]. Its pathway is isoprenoid biosynthesis; isopentenyl diphosphate biosynthesis via DXP pathway; isopentenyl diphosphate from 1-deoxy-D-xylulose 5-phosphate: step 5/6. In terms of biological role, converts 2C-methyl-D-erythritol 2,4-cyclodiphosphate (ME-2,4cPP) into 1-hydroxy-2-methyl-2-(E)-butenyl 4-diphosphate. This chain is 4-hydroxy-3-methylbut-2-en-1-yl diphosphate synthase (flavodoxin), found in Anaplasma marginale (strain St. Maries).